The primary structure comprises 381 residues: uncharacterized protein (381 aa).

2 helical membrane passes run 22 to 42 (GVLLTLAAVAVVASIGTYLTA) and 246 to 266 (LIPENVHWTIWQLWLVVLLVA).

Its subcellular location is the cell membrane. This is an uncharacterized protein from Mycobacterium tuberculosis (strain ATCC 25618 / H37Rv).